Here is a 213-residue protein sequence, read N- to C-terminus: Response regulator GacA (213 aa).

The 117-residue stretch at 3 to 119 folds into the Response regulatory domain; sequence RVLVVDDHDL…EMVQAIRLVF (117 aa). Position 54 is a 4-aspartylphosphate (Asp-54). The HTH luxR-type domain occupies 142 to 207; the sequence is SDSPFDALSE…ELTLLAVRHG (66 aa). A DNA-binding region (H-T-H motif) is located at residues 166 to 185; that stretch reads VQIISDKLCLSPKTVNTYRY.

Phosphorylated by GacS.

In terms of biological role, member of the two-component regulatory system GacA/GacS which controls the expression of secondary metabolites and extracellular products. Acts (probably primarily) by activating expression of CsrA1 and CsrA2 antagonist small RNAs (sRNA) RsmX, RsmY and RsmZ which bind to and prevent translation repression by CsrA1 and CsrA2. Involved in the regulation of secondary metabolism and in the synthesis of the antifungal factors cyanide, 2,4-diacetylphloroglucinol and pyoluteorin. Involved in synthesis of the autoinducing signal (unrelated to N-acylhomoserine lactones, induces the Gac/Csr cascade). Exercises positive post-transcriptional control over the hcnABC and aprA genes; acts upstream of CsrA2 (rsmA). Controls expression of csrA1 (rsmE) and csrA2. The polypeptide is Response regulator GacA (Pseudomonas protegens (strain DSM 19095 / LMG 27888 / CFBP 6595 / CHA0)).